Consider the following 507-residue polypeptide: MGADDGAISADKVDIRLQPLNKNGAQDETDEEAADQIQLRVYKQRWIVLLAVALLNNTNTMSWIGYAPSGNYVNSFYGESSAAWLSMVYMMCTIPVGMFAMWAGREWGLRTAVLIAGWANGIGAVIRVISSLDFVPQDLRFPICMTGQGIAAIAYPFIMFLPTKVAGSWFPDTQRAIATSIGVMSNPLGVLMANLISPAIVKSPEHVIWLNIFTCVPSLIAMLIATFGVNRSEPKIPPTFSASKPQMDFVSGMKSCFSSKQYIILLIVMGGGIGMFNCLYTVMLELLCPSGYSNFFSGVCAALMIVGGVFGAAASSIFVDRTKLYEETLKIALGAAVIFGLIFLQLTLHQGYSVILGVTCLLFGVLGLATYPIGLELASECTFPVSEATSTGLIVLSGQIQSVIYVFIMKNFARPLQPDRMHIQVCQLTPDDTINTPKDNTMSIMIFSLLATLLVLTLVVLFKPVYKRLEAERGNRATADKAKELSNQNKDRITLQAESAVEPLQKK.

The next 12 helical transmembrane spans lie at 46–66, 83–103, 112–132, 141–161, 181–201, 207–227, 263–283, 299–319, 328–348, 354–374, 389–409, and 442–462; these read WIVL…WIGY, AWLS…AMWA, AVLI…ISSL, FPIC…IMFL, IGVM…PAIV, VIWL…IATF, IILL…YTVM, VCAA…SIFV, TLKI…QLTL, VILG…YPIG, TSTG…VFIM, and MSIM…VVLF. Residues 477–493 are compositionally biased toward basic and acidic residues; sequence ATADKAKELSNQNKDRI. Residues 477 to 507 are disordered; it reads ATADKAKELSNQNKDRITLQAESAVEPLQKK.

The protein resides in the membrane. This is an uncharacterized protein from Caenorhabditis elegans.